We begin with the raw amino-acid sequence, 436 residues long: bZIP transcription factor RISBZ1 (436 aa).

Residues 1–27 (MEHVFAVDEIPDPLWAPPPPVQPAAAA) are required for transactivation activity. A disordered region spans residues 182-258 (LSPGPNGGSG…SARRSRSRKA (77 aa)). A compositionally biased stretch (acidic residues) spans 215 to 225 (PSEDDDMEGDA). The bZIP domain maps to 236–299 (EDKVKKRKES…SAAAIDNRVL (64 aa)). The tract at residues 238–257 (KVKKRKESNRESARRSRSRK) is basic motif. The segment at 264–278 (LEEQVSLLRVENSSL) is leucine-zipper.

As to quaternary structure, homodimer. Forms heterodimers with RISBZ2/BZP33 and RISBZ3/BZP20. Interacts with DOF3/RPBF. As to expression, specifically expressed in seeds. Expressed in aleurone and subaleurone layers of maturing seeds, but not in the embryo tissues.

It localises to the nucleus. Its function is as follows. Transcriptional activator that binds to the DNA specific sequence 5'-TGAGTCA-3' found in seed storage protein gene promoters. Involved in the endosperm-specific regulation of storage protein genes. Can activate the expression of genes encoding for the seed storage proteins glutelin, prolamin, globulin and the allergen RAG1. Functions synergistically with DOF3/RPBF to positively regulate quantitatively many seed storage protein genes. Functions synergistically with DOF3/RPBF to positively regulate some metabolic enzymes, such as alanine aminotransferase and pyruvate phosphate dikinase, that are expressed in developing seeds. Functions synergistically with DOF3/RPBF to positively regulate genes that are key players in the development of aleurone layers. Functions synergistically with DOF3/RPBF to positively regulate the glutelin GLUD-1 gene in endosperm of developing seeds. Can activate the expression of the bifunctional lysine-degrading enzyme, lysine ketoglutarate reductase/saccharopine dehydrogenase (LKR/SDH), one of the key regulators determining free lysine content in plants. Functions as a key regulator of starch synthesis in seeds, by direct binding to the promoters of starch-synthesizing genes, such as AGPL3, WAXXY and SBE1. This chain is bZIP transcription factor RISBZ1, found in Oryza sativa subsp. japonica (Rice).